Reading from the N-terminus, the 252-residue chain is Pyrroloquinoline-quinone synthase (252 aa).

Belongs to the PqqC family.

It catalyses the reaction 6-(2-amino-2-carboxyethyl)-7,8-dioxo-1,2,3,4,7,8-hexahydroquinoline-2,4-dicarboxylate + 3 O2 = pyrroloquinoline quinone + 2 H2O2 + 2 H2O + H(+). The protein operates within cofactor biosynthesis; pyrroloquinoline quinone biosynthesis. Its function is as follows. Ring cyclization and eight-electron oxidation of 3a-(2-amino-2-carboxyethyl)-4,5-dioxo-4,5,6,7,8,9-hexahydroquinoline-7,9-dicarboxylic-acid to PQQ. This chain is Pyrroloquinoline-quinone synthase, found in Acinetobacter baumannii (strain ACICU).